Consider the following 376-residue polypeptide: Actin-related protein T1 (376 aa).

It belongs to the actin family.

It localises to the cytoplasm. It is found in the cytoskeleton. Its subcellular location is the nucleus. The protein resides in the cytoplasmic vesicle. The protein localises to the secretory vesicle. It localises to the acrosome. In terms of biological role, negatively regulates the Hedgehog (SHH) signaling. Binds to the promoter of the SHH signaling mediator, GLI1, and inhibits its expression. In Mus musculus (Mouse), this protein is Actin-related protein T1 (Actrt1).